The sequence spans 2365 residues: MTEGTLAADEVRVPLGASPSAPAAPVRASPASPGVPGREEQRGSGSSVLAPESPGTECGADLGADEEQPVPYPALAATVFFCLGQTTRPRSWCLRLVSRRWFEHISMLVIMLNCVTLGMFRPCEDVECRSERCSILEAFDDFIFAFFAVEMVIKMVALGLFGQKCYLGDTWNRLDFFIVMAGMMEYSLDGHNVSLSAIRTVRVLRPLRAINRVPSMRILVTLLLDTLPMLGNVLLLCFFVFFIFGIVGVQLWAGLLRNRCFLDSAFVRNNNLTFLRPYYQTEEGEENPFICSSRRDNGMQKCSHIPSRRELRVQCTLGWEAYGQPQAEDGGAGRNACINWNQYYNVCRSGEFNPHNGAINFDNIGYAWIAIFQVITLEGWVDIMYYVMDAHSFYNFIYFILLIIVGSFFMINLCLVVIATQFSETKQRENQLMREQRARYLSNDSTLASFSEPGSCYEELLKYVGHIFRKVKRRSLRLYARWQSRWRKKVDPSSTLHGQGPRRRPRRAGRRTASVHHLVYHHHHHHHHHYHFSHGGPRRPSPEPGAGDTRLVRACVPPSPPSPGHGPPDSESVHSIYHADCHVEGPQERARVAHTIATAASLKLASGLGTMNYPTILPSGAVNSKGSTSSRPKGLRSAGTPGATAHSPLSLGSPSPYEKIQHVVGEQGLGRASSHLSGLSVPCPLPSPQAGTLTCELKSCPYCASALEDPEFEFSGSESGDSDAHGVYEFTQDVRHGDCRDPVQQPHEGGTPGHGNERWRPPLRTASQPGGLGRLWASFSSKLRRIVDSKYFNRGIMAAILVNTLSMGVEYHEQPDELTNALEISNIVFTSMFALEMLLKLLACGPLGYIRNPYNIFDGIVVIISVWEIVGQADGGLSVLRTFRLLRVLKLVRFLPALRRQLVVLMRTMDNVATFCMLLMLFIFIFSILGMHLFGCKFSLKTDSGDTVPDRKNFDSLLWAIVTVFQILTQEDWNVVLYNGMASTSSWAALYFVALMTFGNYVLFNLLVAILVEGFQAEGDATRSDTDEDKTSTHLEEDFDKLRDVQATEMKMYSLAVTPNGHLEGRGSLPPPLITHTAATPMPTPKSSPHLDMAHTLLDSRRSSSGSVDPQLGDQKSLASLRSSPCAPWGPNSAGSSRRSSWNSLGRAPSLKRRSQCGERESLLSGEGKGSTDDEAEDSRPNSGTHPGASPGPRATPLRRAESLGHRSTMDLCPPRPATLLPTKFRDCNGQMVALPSEFFLRIDSHKEDAAEFDDDIEDSCCFRLHKVLEPYAPQWCSSRESWALYLFPPQNRLRVSCQKVIAHKMFDHVVLVFIFLNCITIALERPDIDPGSTERAFLSVSNYIFTAIFVVEMMVKVVALGLLWGEHAYLQSSWNVLDGLLVLVSLVDIIVAVASAGGAKILGVLRVLRLLRTLRPLRVISRAPGLKLVVETLISSLRPIGNIVLICCAFFIIFGILGVQLFKGKFYYCEGTDTRNITTKAECHAAHYRWVRRKYNFDNLGQALMSLFVLSSKDGWVNIMYDGLDAVGIDQQPVQNHNPWMLLYFISFLLIVSFFVLNMFVGVVVENFHKCRQHQEAEEARRREEKRLRRLERRRRSTFPNPEAQRRPYYADYSHTRRSIHSLCTSHYLDLFITFIICLNVITMSMEHYNQPKSLDEALKYCNYVFTIVFVFEAALKLVAFGFRRFFKDRWNQLDLAIVLLSIMGIALEEIEMNAALPINPTIIRIMRVLRIARVLKLLKMATGMRALLDTVVQALPQVGNLGLLFMLLFFIYAALGVELFGRLECSEDNPCEGLSRHATFTNFGMAFLTLFRVSTGDNWNGIMKDTLRECTREDKHCLSYLPALSPVYFVTFVLVAQFVLVNVVVAVLMKHLEESNKEAREDAEMDAEIELEIAQGSTAQPPSTAQESQGTEPDTPNLLVVRKVSVSRMLSLPNDSYMFRPVAPAAAPHSHPLQEVEMETYTGPVTSAHSPSLEPRTSFQVPSAASSPARVSDPLCALSPRDTPRSLSLSRILCRQEAMHAESLEGQIDDAGEDSIPDYTEPAENISMSQAPLGTLRSPPCSPRPASVRTRKHTFGQHCISSRPPTLGGDDAEAADPADEEVSHITSSAHPWPATEPHSPEASPTASPAKGTVGSGRDPHRFCSVDAQSFLDKPGRPDAQRWSSVELDNGDGHLESGEVRARASELEPALGARRKKKMSPPCISIDPPTEDEGSSRPPAAEGGNTTLRRRTPSCEAALHRDCPESTEGPGTGGDPVAKGERWGQASCRAEHLTVPNFAFEPLDMGGPGGDCFLDSDQSVTPEPRVSSLGAIVPLILETELSMPSGDPPEKEQGLYLTVPQTPLKKPGSPPATPAPDDSGDEPV.

The disordered stretch occupies residues 1–63 (MTEGTLAADE…PGTECGADLG (63 aa)). The Cytoplasmic segment spans residues 1 to 100 (MTEGTLAADE…SWCLRLVSRR (100 aa)). The segment covering 16-36 (GASPSAPAAPVRASPASPGVP) has biased composition (low complexity). The I repeat unit spans residues 87–422 (TRPRSWCLRL…LCLVVIATQF (336 aa)). Residues 101–119 (WFEHISMLVIMLNCVTLGM) form a helical membrane-spanning segment. Residues 120–141 (FRPCEDVECRSERCSILEAFDD) lie on the Extracellular side of the membrane. Residue Asp140 participates in Zn(2+) binding. A helical transmembrane segment spans residues 142 to 160 (FIFAFFAVEMVIKMVALGL). Residues 161-169 (FGQKCYLGD) are Cytoplasmic-facing. A helical membrane pass occupies residues 170 to 184 (TWNRLDFFIVMAGMM). The Extracellular portion of the chain corresponds to 185–193 (EYSLDGHNV). 2 residues coordinate Zn(2+): Asp189 and His191. N-linked (GlcNAc...) asparagine glycosylation occurs at Asn192. The helical transmembrane segment at 194–212 (SLSAIRTVRVLRPLRAINR) threads the bilayer. Topologically, residues 213-232 (VPSMRILVTLLLDTLPMLGN) are cytoplasmic. A helical transmembrane segment spans residues 233–253 (VLLLCFFVFFIFGIVGVQLWA). Over 254–394 (GLLRNRCFLD…YYVMDAHSFY (141 aa)) the chain is Extracellular. A glycan (N-linked (GlcNAc...) asparagine) is linked at Asn271. A helical membrane pass occupies residues 395–419 (NFIYFILLIIVGSFFMINLCLVVIA). Residues 420-790 (TQFSETKQRE…SKLRRIVDSK (371 aa)) are Cytoplasmic-facing. 3 disordered regions span residues 490–573 (VDPS…SESV), 618–656 (PSGA…SPSP), and 737–761 (GDCR…RWRP). Positions 500 to 532 (GPRRRPRRAGRRTASVHHLVYHHHHHHHHHYHF) are enriched in basic residues. Pro residues predominate over residues 557 to 566 (PPSPPSPGHG). Over residues 621–631 (AVNSKGSTSSR) the composition is skewed to polar residues. The stretch at 776–1015 (WASFSSKLRR…LLVAILVEGF (240 aa)) is one II repeat. A helical transmembrane segment spans residues 791 to 811 (YFNRGIMAAILVNTLSMGVEY). At 812-824 (HEQPDELTNALEI) the chain is on the extracellular side. The helical transmembrane segment at 825-846 (SNIVFTSMFALEMLLKLLACGP) threads the bilayer. Residues 847 to 852 (LGYIRN) lie on the Cytoplasmic side of the membrane. Residues 853–871 (PYNIFDGIVVIISVWEIVG) traverse the membrane as a helical segment. Topologically, residues 872 to 879 (QADGGLSV) are extracellular. The helical transmembrane segment at 880–903 (LRTFRLLRVLKLVRFLPALRRQLV) threads the bilayer. Topologically, residues 904–914 (VLMRTMDNVAT) are cytoplasmic. Residues 915–935 (FCMLLMLFIFIFSILGMHLFG) traverse the membrane as a helical segment. Topologically, residues 936 to 987 (CKFSLKTDSGDTVPDRKNFDSLLWAIVTVFQILTQEDWNVVLYNGMASTSSW) are extracellular. Residues 988-1012 (AALYFVALMTFGNYVLFNLLVAILV) form a helical membrane-spanning segment. The Cytoplasmic portion of the chain corresponds to 1013–1301 (EGFQAEGDAT…NRLRVSCQKV (289 aa)). Residues 1059 to 1215 (PNGHLEGRGS…HRSTMDLCPP (157 aa)) form a disordered region. Positions 1130–1147 (GPNSAGSSRRSSWNSLGR) are enriched in low complexity. Residues 1199–1209 (RRAESLGHRST) show a composition bias toward basic and acidic residues. The stretch at 1292–1569 (NRLRVSCQKV…MFVGVVVENF (278 aa)) is one III repeat. The helical transmembrane segment at 1302–1324 (IAHKMFDHVVLVFIFLNCITIAL) threads the bilayer. At 1325–1342 (ERPDIDPGSTERAFLSVS) the chain is on the extracellular side. A helical membrane pass occupies residues 1343-1363 (NYIFTAIFVVEMMVKVVALGL). Over 1364–1373 (LWGEHAYLQS) the chain is Cytoplasmic. Residues 1374-1393 (SWNVLDGLLVLVSLVDIIVA) form a helical membrane-spanning segment. The Extracellular segment spans residues 1394–1407 (VASAGGAKILGVLR). Residues 1408-1429 (VLRLLRTLRPLRVISRAPGLKL) form a helical membrane-spanning segment. The Cytoplasmic segment spans residues 1430-1439 (VVETLISSLR). Residues 1440–1463 (PIGNIVLICCAFFIIFGILGVQLF) form a helical membrane-spanning segment. The Extracellular segment spans residues 1464-1540 (KGKFYYCEGT…DQQPVQNHNP (77 aa)). The N-linked (GlcNAc...) asparagine glycan is linked to Asn1477. Residues 1541–1566 (WMLLYFISFLLIVSFFVLNMFVGVVV) form a helical membrane-spanning segment. Topologically, residues 1567–1627 (ENFHKCRQHQ…RRSIHSLCTS (61 aa)) are cytoplasmic. The stretch at 1613-1874 (DYSHTRRSIH…VVVAVLMKHL (262 aa)) is one IV repeat. A helical transmembrane segment spans residues 1628–1648 (HYLDLFITFIICLNVITMSME). The Extracellular segment spans residues 1649 to 1662 (HYNQPKSLDEALKY). Residues 1663–1684 (CNYVFTIVFVFEAALKLVAFGF) form a helical membrane-spanning segment. Topologically, residues 1685-1691 (RRFFKDR) are cytoplasmic. Residues 1692–1710 (WNQLDLAIVLLSIMGIALE) traverse the membrane as a helical segment. Topologically, residues 1711-1724 (EIEMNAALPINPTI) are extracellular. The chain crosses the membrane as a helical span at residues 1725–1748 (IRIMRVLRIARVLKLLKMATGMRA). Residues 1749–1762 (LLDTVVQALPQVGN) are Cytoplasmic-facing. The chain crosses the membrane as a helical span at residues 1763–1783 (LGLLFMLLFFIYAALGVELFG). Residues 1784–1846 (RLECSEDNPC…KHCLSYLPAL (63 aa)) are Extracellular-facing. A helical membrane pass occupies residues 1847 to 1874 (SPVYFVTFVLVAQFVLVNVVVAVLMKHL). The Cytoplasmic segment spans residues 1875 to 2365 (EESNKEARED…APDDSGDEPV (491 aa)). 2 stretches are compositionally biased toward polar residues: residues 1897–1916 (QGST…TEPD) and 1967–1983 (VTSA…SFQV). Disordered stretches follow at residues 1897–1920 (QGST…TPNL), 1967–1999 (VTSA…PLCA), 2053–2264 (APLG…GERW), and 2321–2365 (ELSM…DEPV). The span at 2092–2102 (DDAEAADPADE) shows a compositional bias: acidic residues. Positions 2172 to 2187 (GDGHLESGEVRARASE) are enriched in basic and acidic residues.

Belongs to the calcium channel alpha-1 subunit (TC 1.A.1.11) family. CACNA1H subfamily. Interacts (via N-terminal cytoplasmic domain) with STAC. In response to raising of intracellular calcium, the T-type channels are activated by CaM-kinase II. In terms of tissue distribution, is highly expressed in lumbosacral and thoracolumbar dorsal root ganglion neurons.

Its subcellular location is the cell membrane. The enzyme catalyses Ca(2+)(in) = Ca(2+)(out). Its function is as follows. Voltage-sensitive calcium channel that gives rise to T-type calcium currents. T-type calcium channels belong to the 'low-voltage activated (LVA)' group. A particularity of this type of channel is an opening at quite negative potentials, and a voltage-dependent inactivation. T-type channels serve pacemaking functions in both central neurons and cardiac nodal cells and support calcium signaling in secretory cells and vascular smooth muscle. They may also be involved in the modulation of firing patterns of neurons. In the adrenal zona glomerulosa, participates in the signaling pathway leading to aldosterone production in response to either AGT/angiotensin II, or hyperkalemia. This chain is Voltage-dependent T-type calcium channel subunit alpha-1H (Cacna1h), found in Mus musculus (Mouse).